A 355-amino-acid polypeptide reads, in one-letter code: Protein RecA (355 aa).

Residue 66–73 (GPESSGKT) participates in ATP binding. A disordered region spans residues 331–355 (DVPEEDLPTTEDEQINILPDDSTEE). Residues 332-344 (VPEEDLPTTEDEQ) show a composition bias toward acidic residues.

This sequence belongs to the RecA family.

The protein localises to the cytoplasm. Functionally, can catalyze the hydrolysis of ATP in the presence of single-stranded DNA, the ATP-dependent uptake of single-stranded DNA by duplex DNA, and the ATP-dependent hybridization of homologous single-stranded DNAs. It interacts with LexA causing its activation and leading to its autocatalytic cleavage. This is Protein RecA from Latilactobacillus sakei subsp. sakei (strain 23K) (Lactobacillus sakei subsp. sakei).